Here is a 131-residue protein sequence, read N- to C-terminus: Keratin, high-sulfur matrix protein, IIIA3 (131 aa).

In terms of tissue distribution, wool.

In terms of biological role, the keratin products of mammalian epidermal derivatives such as wool and hair consist of microfibrils embedded in a rigid matrix of other proteins. The matrix proteins include the high-sulfur and high-tyrosine keratins, having molecular weights of 6-20 kDa, whereas the microfibrils contain the larger, low-sulfur keratins (40-56 kDa). The chain is Keratin, high-sulfur matrix protein, IIIA3 from Ovis aries (Sheep).